Reading from the N-terminus, the 345-residue chain is Inositol phosphoceramide mannosyltransferase 2 (345 aa).

Residues 4–24 (VIYKFAVFAAVNFFLMSSIVL) form a helical membrane-spanning segment. An N-linked (GlcNAc...) asparagine glycan is attached at Asn55. The chain crosses the membrane as a helical span at residues 220–240 (YWLPYLTIMLSTGPLSISFLW). A glycan (N-linked (GlcNAc...) asparagine) is linked at Asn269. A helical membrane pass occupies residues 296–316 (LAYVIVAGFCLYFILSYMFFS).

Belongs to the glycosyltransferase 32 family.

It is found in the golgi apparatus. The protein localises to the cis-Golgi network membrane. Its subcellular location is the trans-Golgi network membrane. Its function is as follows. With imt1 and imt3, is required for the synthesis of mannosyl phosphorylinositol ceramide (MIPC). Catalyzes the addition of mannosyl to phosphorylinositol ceramide (IPC). MIPC is essential for cell morphology, cell-surface distribution of ergosterol, localization for plasma-membrane transporters, and lipid-raft-mediated endocytosis of plasma membrane proteins to the vacuole. The sequence is that of Inositol phosphoceramide mannosyltransferase 2 from Schizosaccharomyces pombe (strain 972 / ATCC 24843) (Fission yeast).